Reading from the N-terminus, the 124-residue chain is Quinol oxidase subunit 4 (124 aa).

3 consecutive transmembrane segments (helical) span residues 16 to 36 (IVGF…AVYT), 44 to 64 (LWII…MFMH), and 78 to 98 (TLFG…IFAA).

The protein belongs to the cytochrome c oxidase bacterial subunit 4 family.

It is found in the cell membrane. It catalyses the reaction 2 a quinol + O2 = 2 a quinone + 2 H2O. Catalyzes quinol oxidation with the concomitant reduction of oxygen to water. Major component for energy conversion during vegetative growth. The protein is Quinol oxidase subunit 4 (qoxD) of Bacillus spizizenii (strain ATCC 23059 / NRRL B-14472 / W23) (Bacillus subtilis subsp. spizizenii).